A 335-amino-acid polypeptide reads, in one-letter code: Glutamyl-tRNA reductase (335 aa).

Residues 60–63 (TCHR), S110, 115–117 (ETE), and Q121 each bind substrate. The Nucleophile role is filled by C61. 189-194 (GYSEIN) contributes to the NADP(+) binding site.

It belongs to the glutamyl-tRNA reductase family. Homodimer.

The catalysed reaction is (S)-4-amino-5-oxopentanoate + tRNA(Glu) + NADP(+) = L-glutamyl-tRNA(Glu) + NADPH + H(+). It functions in the pathway porphyrin-containing compound metabolism; protoporphyrin-IX biosynthesis; 5-aminolevulinate from L-glutamyl-tRNA(Glu): step 1/2. In terms of biological role, catalyzes the NADPH-dependent reduction of glutamyl-tRNA(Glu) to glutamate 1-semialdehyde (GSA). This Chlamydia trachomatis serovar A (strain ATCC VR-571B / DSM 19440 / HAR-13) protein is Glutamyl-tRNA reductase.